Here is a 351-residue protein sequence, read N- to C-terminus: Peptide chain release factor 1 (351 aa).

Gln229 is subject to N5-methylglutamine. Positions 278 to 297 (RVDDERSADRAAQVGSGDRS) are disordered.

It belongs to the prokaryotic/mitochondrial release factor family. Methylated by PrmC. Methylation increases the termination efficiency of RF1.

It localises to the cytoplasm. In terms of biological role, peptide chain release factor 1 directs the termination of translation in response to the peptide chain termination codons UAG and UAA. This is Peptide chain release factor 1 from Roseobacter denitrificans (strain ATCC 33942 / OCh 114) (Erythrobacter sp. (strain OCh 114)).